A 284-amino-acid polypeptide reads, in one-letter code: MNKQQLKAYFMLMRLHRPIPILLILWPTLTALVLASHGLPDISYLVIFTIGVVVMRTVGCIINDIADVDFDKHVARTNTRPLTSGQLSIKNAIWLCISLTLVAFICVLFLNLYTILLSFVALFLAILYPFCKRFFAIPQLILGLAFNFGIFMAFSAIQNQIPVEAWIFYIATICWTIAYDTIYALADREFDLEIGIKSSAVLFGNKVFRYILLFNFLSLLLLIILGIYCDFNSFFYLGVVICSLFFVRNYFLYKKLGITNCINAFSANHWIGLIIFIIAVIQYI.

Helical transmembrane passes span 19-39 (IPIL…SHGL), 42-62 (ISYL…GCII), 85-105 (GQLS…VAFI), 107-127 (VLFL…LAIL), 134-154 (FFAI…FMAF), 165-185 (AWIF…IYAL), 211-231 (ILLF…YCDF), 233-253 (SFFY…YFLY), and 261-281 (CINA…IAVI).

It belongs to the UbiA prenyltransferase family. Mg(2+) is required as a cofactor.

The protein localises to the cell inner membrane. The enzyme catalyses all-trans-octaprenyl diphosphate + 4-hydroxybenzoate = 4-hydroxy-3-(all-trans-octaprenyl)benzoate + diphosphate. The protein operates within cofactor biosynthesis; ubiquinone biosynthesis. Catalyzes the prenylation of para-hydroxybenzoate (PHB) with an all-trans polyprenyl group. Mediates the second step in the final reaction sequence of ubiquinone-8 (UQ-8) biosynthesis, which is the condensation of the polyisoprenoid side chain with PHB, generating the first membrane-bound Q intermediate 3-octaprenyl-4-hydroxybenzoate. In Francisella tularensis subsp. holarctica (strain LVS), this protein is 4-hydroxybenzoate octaprenyltransferase.